The primary structure comprises 63 residues: Large ribosomal subunit protein uL29 (63 aa).

This sequence belongs to the universal ribosomal protein uL29 family.

In Alteromonas mediterranea (strain DSM 17117 / CIP 110805 / LMG 28347 / Deep ecotype), this protein is Large ribosomal subunit protein uL29.